We begin with the raw amino-acid sequence, 91 residues long: AGDAAAGKTLYDASCASCHGMQAQGQGMFPKLAGLTSERIKTTLVAFKSGDTATLKKEGLGGPMSAIMAPNAAGLSEQDMDNLSAYIATLK.

The heme c site is built by C15, C18, H19, and M64.

Monomer. In terms of processing, binds 1 heme c group covalently per subunit.

The sequence is that of Cytochrome c-554(547) from Halothiobacillus neapolitanus (Thiobacillus neapolitanus).